A 382-amino-acid chain; its full sequence is Chorismate synthase (382 aa).

Residues Arg39 and Arg45 each contribute to the NADP(+) site. A disordered region spans residues 89-113 (SPEPGGEPRKKALTDARPGHADLTG). A compositionally biased stretch (basic and acidic residues) spans 94–108 (GEPRKKALTDARPGH). FMN is bound by residues 128–130 (RAS), 246–247 (QA), Ala290, 305–309 (KPIAT), and Arg331.

The protein belongs to the chorismate synthase family. Homotetramer. FMNH2 serves as cofactor.

The enzyme catalyses 5-O-(1-carboxyvinyl)-3-phosphoshikimate = chorismate + phosphate. It functions in the pathway metabolic intermediate biosynthesis; chorismate biosynthesis; chorismate from D-erythrose 4-phosphate and phosphoenolpyruvate: step 7/7. Functionally, catalyzes the anti-1,4-elimination of the C-3 phosphate and the C-6 proR hydrogen from 5-enolpyruvylshikimate-3-phosphate (EPSP) to yield chorismate, which is the branch point compound that serves as the starting substrate for the three terminal pathways of aromatic amino acid biosynthesis. This reaction introduces a second double bond into the aromatic ring system. This Deinococcus radiodurans (strain ATCC 13939 / DSM 20539 / JCM 16871 / CCUG 27074 / LMG 4051 / NBRC 15346 / NCIMB 9279 / VKM B-1422 / R1) protein is Chorismate synthase.